Reading from the N-terminus, the 626-residue chain is Chaperone protein HtpG (626 aa).

The a; substrate-binding stretch occupies residues methionine 1–arginine 339. Positions glutamate 340 to lysine 555 are b. The segment at leucine 556–glycine 626 is c.

It belongs to the heat shock protein 90 family. As to quaternary structure, homodimer.

Its subcellular location is the cytoplasm. Its function is as follows. Molecular chaperone. Has ATPase activity. This Haemophilus influenzae (strain 86-028NP) protein is Chaperone protein HtpG.